The primary structure comprises 246 residues: 3'(2'),5'-bisphosphate nucleotidase CysQ (246 aa).

Mg(2+) contacts are provided by E64, D83, L85, D86, and D205. E64 contributes to the substrate binding site. Substrate contacts are provided by residues 85–88 and D205; that span reads LDGT.

This sequence belongs to the inositol monophosphatase superfamily. CysQ family. It depends on Mg(2+) as a cofactor.

Its subcellular location is the cell inner membrane. It carries out the reaction adenosine 3',5'-bisphosphate + H2O = AMP + phosphate. In terms of biological role, converts adenosine-3',5'-bisphosphate (PAP) to AMP. The polypeptide is 3'(2'),5'-bisphosphate nucleotidase CysQ (Escherichia coli O6:H1 (strain CFT073 / ATCC 700928 / UPEC)).